The primary structure comprises 226 residues: N-acetylmuramic acid 6-phosphate phosphatase (226 aa).

Asp-12 acts as the Nucleophile in catalysis. Residues Asp-12, Asp-14, and Asp-171 each contribute to the Mg(2+) site. The active-site Proton donor is the Asp-14.

Belongs to the HAD-like hydrolase superfamily. CbbY/CbbZ/Gph/YieH family. Phosphatase MupP subfamily. It depends on Mg(2+) as a cofactor.

It catalyses the reaction N-acetyl-D-muramate 6-phosphate + H2O = N-acetyl-D-muramate + phosphate. Its pathway is cell wall biogenesis; peptidoglycan recycling. Its function is as follows. Specifically catalyzes the dephosphorylation of N-acetylmuramate 6-phosphate (MurNAc-6P) to MurNac. Is involved in peptidoglycan recycling as part of a cell wall recycling pathway that bypasses de novo biosynthesis of the peptidoglycan precursor UDP-MurNAc. Plays a role in intrinsic resistance to fosfomycin, which targets the de novo synthesis of UDP-MurNAc. The sequence is that of N-acetylmuramic acid 6-phosphate phosphatase from Pseudomonas aeruginosa (strain ATCC 15692 / DSM 22644 / CIP 104116 / JCM 14847 / LMG 12228 / 1C / PRS 101 / PAO1).